The following is a 92-amino-acid chain: PqqA binding protein (92 aa).

The protein belongs to the PqqD family. Monomer. Interacts with PqqE.

It functions in the pathway cofactor biosynthesis; pyrroloquinoline quinone biosynthesis. Its function is as follows. Functions as a PqqA binding protein and presents PqqA to PqqE, in the pyrroloquinoline quinone (PQQ) biosynthetic pathway. The chain is PqqA binding protein from Azotobacter vinelandii (strain DJ / ATCC BAA-1303).